Here is a 26-residue protein sequence, read N- to C-terminus: AMP deaminase 1 (26 aa).

Belongs to the metallo-dependent hydrolases superfamily. Adenosine and AMP deaminases family. As to quaternary structure, homotetramer.

The catalysed reaction is AMP + H2O + H(+) = IMP + NH4(+). Its pathway is purine metabolism; IMP biosynthesis via salvage pathway; IMP from AMP: step 1/1. Functionally, AMP deaminase plays a critical role in energy metabolism. The sequence is that of AMP deaminase 1 (AMPD1) from Gallus gallus (Chicken).